A 451-amino-acid polypeptide reads, in one-letter code: NADH-quinone oxidoreductase subunit D (451 aa).

The protein belongs to the complex I 49 kDa subunit family. In terms of assembly, NDH-1 is composed of 14 different subunits. Subunits NuoB, C, D, E, F, and G constitute the peripheral sector of the complex.

It is found in the cell membrane. It carries out the reaction a quinone + NADH + 5 H(+)(in) = a quinol + NAD(+) + 4 H(+)(out). Its function is as follows. NDH-1 shuttles electrons from NADH, via FMN and iron-sulfur (Fe-S) centers, to quinones in the respiratory chain. The immediate electron acceptor for the enzyme in this species is believed to be a menaquinone. Couples the redox reaction to proton translocation (for every two electrons transferred, four hydrogen ions are translocated across the cytoplasmic membrane), and thus conserves the redox energy in a proton gradient. In Mycolicibacterium gilvum (strain PYR-GCK) (Mycobacterium gilvum (strain PYR-GCK)), this protein is NADH-quinone oxidoreductase subunit D.